Here is a 329-residue protein sequence, read N- to C-terminus: GTP 3',8-cyclase (329 aa).

Residues 8–234 (AFARKFYYLR…QLRQRSDGPA (227 aa)) enclose the Radical SAM core domain. Residue Arg-17 coordinates GTP. The [4Fe-4S] cluster site is built by Cys-24 and Cys-28. Tyr-30 contacts S-adenosyl-L-methionine. Cys-31 is a [4Fe-4S] cluster binding site. Arg-68 contributes to the GTP binding site. An S-adenosyl-L-methionine-binding site is contributed by Gly-72. Residue Thr-99 participates in GTP binding. Position 123 (Ser-123) interacts with S-adenosyl-L-methionine. Lys-160 serves as a coordination point for GTP. Met-194 is an S-adenosyl-L-methionine binding site. [4Fe-4S] cluster-binding residues include Cys-257 and Cys-260. A GTP-binding site is contributed by 262 to 264 (RLR). Cys-274 contributes to the [4Fe-4S] cluster binding site.

The protein belongs to the radical SAM superfamily. MoaA family. In terms of assembly, monomer and homodimer. It depends on [4Fe-4S] cluster as a cofactor.

It catalyses the reaction GTP + AH2 + S-adenosyl-L-methionine = (8S)-3',8-cyclo-7,8-dihydroguanosine 5'-triphosphate + 5'-deoxyadenosine + L-methionine + A + H(+). Its pathway is cofactor biosynthesis; molybdopterin biosynthesis. Catalyzes the cyclization of GTP to (8S)-3',8-cyclo-7,8-dihydroguanosine 5'-triphosphate. This is GTP 3',8-cyclase from Escherichia coli O139:H28 (strain E24377A / ETEC).